Consider the following 396-residue polypeptide: MAFKTLDDLSVAGKTVLVRGDLNVPVQDGRVSDTTRLDRLAPTLKELAGKGAKVVVLSHFGRPKGGPDAKNSLRQVVPALEAALGLPVAFAEDCVGESARAAIAAIEPGQVVLLENTRFHAGEEKNDPELARQMAALGDIYVNDAFSAAHRAHASTEGIAHLLPSAAGRLMQAELEALGKALARPERPVMAVVGGAKISTKLDLLLNMVTKVDMLVLGGGMANTFLFAQGRPVGKSLAEKDMADQARAIMEKAAASGCEILLPQDGAMAKEFKAGAPHRVVPVEQIADDEMMLDVGPATVEFVGLKLQGAKTVVWNGPMGAFEIRPFDSGTNAVAGLVAALTGDGRVLSVAGGGDTVAALEQAGVAGRFSYVSTAGGAFLEWLEGKELPGVKALGA.

Residues 21 to 23 (DLN), R36, 59 to 62 (HFGR), R118, and R151 contribute to the substrate site. ATP-binding positions include K201, E323, and 353–356 (GGDT).

The protein belongs to the phosphoglycerate kinase family. In terms of assembly, monomer.

The protein resides in the cytoplasm. The enzyme catalyses (2R)-3-phosphoglycerate + ATP = (2R)-3-phospho-glyceroyl phosphate + ADP. It participates in carbohydrate degradation; glycolysis; pyruvate from D-glyceraldehyde 3-phosphate: step 2/5. This Rhodospirillum centenum (strain ATCC 51521 / SW) protein is Phosphoglycerate kinase.